A 466-amino-acid polypeptide reads, in one-letter code: Ribulose bisphosphate carboxylase large chain (466 aa).

K4 is modified (N6,N6,N6-trimethyllysine). The substrate site is built by N113 and T163. The active-site Proton acceptor is the K165. Position 167 (K167) interacts with substrate. Residues K191, D193, and E194 each contribute to the Mg(2+) site. N6-carboxylysine is present on K191. Residue H284 is the Proton acceptor of the active site. Substrate-binding residues include R285, H317, and S369.

It belongs to the RuBisCO large chain family. Type I subfamily. Heterohexadecamer of 8 large chains and 8 small chains; disulfide-linked. The disulfide link is formed within the large subunit homodimers. Requires Mg(2+) as cofactor. In terms of processing, the disulfide bond which can form in the large chain dimeric partners within the hexadecamer appears to be associated with oxidative stress and protein turnover.

The protein resides in the plastid. It localises to the chloroplast. The catalysed reaction is 2 (2R)-3-phosphoglycerate + 2 H(+) = D-ribulose 1,5-bisphosphate + CO2 + H2O. It catalyses the reaction D-ribulose 1,5-bisphosphate + O2 = 2-phosphoglycolate + (2R)-3-phosphoglycerate + 2 H(+). Its function is as follows. RuBisCO catalyzes two reactions: the carboxylation of D-ribulose 1,5-bisphosphate, the primary event in carbon dioxide fixation, as well as the oxidative fragmentation of the pentose substrate in the photorespiration process. Both reactions occur simultaneously and in competition at the same active site. The protein is Ribulose bisphosphate carboxylase large chain of Pinguicula caerulea (Blueflower butterwort).